Here is a 490-residue protein sequence, read N- to C-terminus: tRNA modification GTPase MnmE (490 aa).

(6S)-5-formyl-5,6,7,8-tetrahydrofolate is bound by residues Arg-23, Glu-80, and Lys-133. One can recognise a TrmE-type G domain in the interval 229–412 (GIEVVIAGQP…LRRILLEVAG (184 aa)). Asn-239 contributes to the K(+) binding site. GTP is bound by residues 239-244 (NAGKSS), 258-264 (TPVAGTT), and 283-286 (DTAG). A Mg(2+)-binding site is contributed by Ser-243. K(+) contacts are provided by Thr-258, Val-260, and Thr-263. Mg(2+) is bound at residue Thr-264. Positions 366-382 (PTAPTESAAVPPASARP) are enriched in low complexity. The tract at residues 366 to 388 (PTAPTESAAVPPASARPAPAPRP) is disordered. Position 393–395 (393–395 (SAR)) interacts with GTP. Lys-490 serves as a coordination point for (6S)-5-formyl-5,6,7,8-tetrahydrofolate.

It belongs to the TRAFAC class TrmE-Era-EngA-EngB-Septin-like GTPase superfamily. TrmE GTPase family. In terms of assembly, homodimer. Heterotetramer of two MnmE and two MnmG subunits. Requires K(+) as cofactor.

The protein localises to the cytoplasm. Functionally, exhibits a very high intrinsic GTPase hydrolysis rate. Involved in the addition of a carboxymethylaminomethyl (cmnm) group at the wobble position (U34) of certain tRNAs, forming tRNA-cmnm(5)s(2)U34. The polypeptide is tRNA modification GTPase MnmE (Verminephrobacter eiseniae (strain EF01-2)).